The chain runs to 588 residues: MSGDYEDDLCRRALILVSDLCARIRDADTNDRCQEFNELRIRGYPRGPDADISVSLLSVIVTFCGIVLLGVSLFVSWKLCWVPWRDKGGSAVGGGPLRKDLAPGVGLAGLVGGGGHHLGASLGGHPLLGGPHHHAHPAHHPPFAELLEPGGLGGSEPPEPSYLDMDSYPEAAVASVVAAGVKPSQTSPELPSEGGTGSGLLLLPPSGGGLPSAQSHQQVTSLAPTTRYPALPRPLTQQTLTTQADPSSEERPPALPLPLPGGEEKAKLIGQIKPELYQGTGPGGRRTGGGSGEAGAPCGRISFALRYLYGSDQLVVRILQALDLPAKDSNGFSDPYVKIYLLPDRKKKFQTKVHRKTLNPIFNETFQFSVPLAELAQRKLHFSVYDFDRFSRHDLIGQVVLDNLLELAEQPPDRPLWRDILEGGSEKADLGELNFSLCYLPTAGLLTVTIIKASNLKAMDLTGFSDPYVKASLISEGRRLKKRKTSIKKNTLNPTYNEALVFDVAPESVENVGLSIAVVDYDCIGHNEVIGVCRVGPEAADPHGREHWAEMLANPRKPVEHWHQLVEEKTLSSFTKGGKGLSEKENSE.

Over 1–54 (MSGDYEDDLCRRALILVSDLCARIRDADTNDRCQEFNELRIRGYPRGPDADISV) the chain is Vesicular. Positions 10–34 (CRRALILVSDLCARIRDADTNDRCQ) are cysteine motif. A helical transmembrane segment spans residues 55 to 75 (SLLSVIVTFCGIVLLGVSLFV). Topologically, residues 76 to 588 (SWKLCWVPWR…KGLSEKENSE (513 aa)) are cytoplasmic. Disordered regions lie at residues 129–161 (GGPH…PEPS), 183–222 (PSQT…VTSL), and 238–257 (QTLT…ALPL). A compositionally biased stretch (low complexity) spans 183-205 (PSQTSPELPSEGGTGSGLLLLPP). Residues 213-222 (AQSHQQVTSL) show a composition bias toward polar residues. R286 is subject to Omega-N-methylarginine. C2 domains are found at residues 297 to 418 (PCGR…PLWR) and 429 to 563 (DLGE…EHWH). Ca(2+) contacts are provided by D328, D334, D386, F387, D388, S391, D394, D460, D466, D520, and D522.

Belongs to the synaptotagmin family. Homodimer; disulfide-linked via the cysteine motif. Can also form heterodimers with SYT6, SYT9 and SYT10. Requires Ca(2+) as cofactor. In terms of tissue distribution, brain, various endocrine tissues and hormone-secreting clonal cells.

The protein localises to the cell membrane. Its subcellular location is the cytoplasmic vesicle. The protein resides in the secretory vesicle membrane. Its function is as follows. Ca(2+) sensor involved in Ca(2+)-dependent exocytosis of secretory vesicles through Ca(2+) and phospholipid binding to the C2 domain. Ca(2+) induces binding of the C2-domains to phospholipid membranes and to assembled SNARE-complexes; both actions contribute to triggering exocytosis. Plays a role in dendrite formation by melanocytes. The polypeptide is Synaptotagmin-3 (Syt3) (Rattus norvegicus (Rat)).